Here is a 469-residue protein sequence, read N- to C-terminus: MEKKKPRTLVEKIWERHVVRRAEGEPDLLYVDLHMVHEVTSPQAFEALRLAGRRVRRPDLTVATMDHNVPTTDVRLGVRDRVSARQMEALRKNCEEFGIQLHEWGSPGQGIVHVIGPEMGLTQPGMVIVCGDSHTSTHGAFGALAFGIGTSEVEHVLATQTIPQRRPKTMAITVEGEAPPDVTAKDIMLGILHRIGTGGGVGHAIEYRGEAIRNLSMEGRMTICNMTIEGGGRAGMVAPDEKTYSYIEGRPHAPKGRAWEEALEYWQSLPTDEGATFDKEVVIDAAELVPYVSWGTTPAQTVPLDGEVPEPQNEGHERALRYMGLRPGTPIREIEVDTVFIGSCTNARIEDLRAAARVLEGHKVKEGIRAMVVPGSMRVKKQAEEEGLDEIFKKAGFEWRNAGCSMCLGMNPDILSPGERCASTSNRNFEGRQGKGGRTHLVSPVVAAATAVMGRFASPSELGVPVEVG.

3 residues coordinate [4Fe-4S] cluster: C344, C404, and C407.

This sequence belongs to the aconitase/IPM isomerase family. LeuC type 1 subfamily. Heterodimer of LeuC and LeuD. Requires [4Fe-4S] cluster as cofactor.

The catalysed reaction is (2R,3S)-3-isopropylmalate = (2S)-2-isopropylmalate. Its pathway is amino-acid biosynthesis; L-leucine biosynthesis; L-leucine from 3-methyl-2-oxobutanoate: step 2/4. In terms of biological role, catalyzes the isomerization between 2-isopropylmalate and 3-isopropylmalate, via the formation of 2-isopropylmaleate. This Rubrobacter xylanophilus (strain DSM 9941 / JCM 11954 / NBRC 16129 / PRD-1) protein is 3-isopropylmalate dehydratase large subunit 1.